The following is a 102-amino-acid chain: Large ribosomal subunit protein uL24 (102 aa).

This sequence belongs to the universal ribosomal protein uL24 family. In terms of assembly, part of the 50S ribosomal subunit.

Functionally, one of two assembly initiator proteins, it binds directly to the 5'-end of the 23S rRNA, where it nucleates assembly of the 50S subunit. Its function is as follows. One of the proteins that surrounds the polypeptide exit tunnel on the outside of the subunit. This Cupriavidus pinatubonensis (strain JMP 134 / LMG 1197) (Cupriavidus necator (strain JMP 134)) protein is Large ribosomal subunit protein uL24.